The following is a 217-amino-acid chain: Probable rhamnogalacturonan acetylesterase YesY (217 aa).

Catalysis depends on S11, which acts as the Nucleophile. Active-site residues include E178 and H185.

This sequence belongs to the 'GDSL' lipolytic enzyme family.

In terms of biological role, may play a role in the degradation of rhamnogalacturonan derived from plant cell walls. Probably has broad substrate specificity and may degrade several types of acetylated substrates. In Bacillus subtilis (strain 168), this protein is Probable rhamnogalacturonan acetylesterase YesY (yesY).